A 630-amino-acid chain; its full sequence is Succinate dehydrogenase [ubiquinone] flavoprotein subunit, mitochondrial (630 aa).

The transit peptide at 1 to 31 (MWRGCVSRGLRSLSKGKGSSSSAPVSAAARL) directs the protein to the mitochondrion. Residues 52–57 (GAGGAG), 75–90 (TKLFPTRSHTVAAQGG), and Asp260 contribute to the FAD site. His83 is modified (tele-8alpha-FAD histidine). Residues His281 and Thr293 each contribute to the substrate site. The Proton acceptor role is filled by Arg325. Position 392 (His392) interacts with substrate. Glu426 contributes to the FAD binding site. Position 437 (Arg437) interacts with substrate. An FAD-binding site is contributed by 442–443 (SL).

This sequence belongs to the FAD-dependent oxidoreductase 2 family. FRD/SDH subfamily. In terms of assembly, component of complex II composed of eight subunits in plants: four classical SDH subunits SDH1, SDH2, SDH3 and SDH4 (a flavoprotein (FP), an iron-sulfur protein (IP), and a cytochrome b composed of a large and a small subunit.), as well as four subunits unknown in mitochondria from bacteria and heterotrophic eukaryotes. FAD is required as a cofactor.

The protein localises to the mitochondrion inner membrane. It carries out the reaction a quinone + succinate = fumarate + a quinol. The protein operates within carbohydrate metabolism; tricarboxylic acid cycle; fumarate from succinate (eukaryal route): step 1/1. Its function is as follows. Flavoprotein (FP) subunit of succinate dehydrogenase (SDH) that is involved in complex II of the mitochondrial electron transport chain and is responsible for transferring electrons from succinate to ubiquinone (coenzyme Q). The protein is Succinate dehydrogenase [ubiquinone] flavoprotein subunit, mitochondrial (SDH1) of Oryza sativa subsp. japonica (Rice).